The following is a 404-amino-acid chain: Phosphopentomutase (404 aa).

Residues Asp-10, Asp-303, His-308, Asp-344, His-345, and His-356 each contribute to the Mn(2+) site.

Belongs to the phosphopentomutase family. Mn(2+) serves as cofactor.

The protein localises to the cytoplasm. The catalysed reaction is 2-deoxy-alpha-D-ribose 1-phosphate = 2-deoxy-D-ribose 5-phosphate. It catalyses the reaction alpha-D-ribose 1-phosphate = D-ribose 5-phosphate. The protein operates within carbohydrate degradation; 2-deoxy-D-ribose 1-phosphate degradation; D-glyceraldehyde 3-phosphate and acetaldehyde from 2-deoxy-alpha-D-ribose 1-phosphate: step 1/2. Its function is as follows. Isomerase that catalyzes the conversion of deoxy-ribose 1-phosphate (dRib-1-P) and ribose 1-phosphate (Rib-1-P) to deoxy-ribose 5-phosphate (dRib-5-P) and ribose 5-phosphate (Rib-5-P), respectively. The polypeptide is Phosphopentomutase (Shewanella putrefaciens (strain CN-32 / ATCC BAA-453)).